Reading from the N-terminus, the 264-residue chain is Thymidylate synthase (264 aa).

Arg-21 is a dUMP binding site. (6R)-5,10-methylene-5,6,7,8-tetrahydrofolate is bound at residue His-51. 126 to 127 contributes to the dUMP binding site; sequence RR. Cys-146 (nucleophile) is an active-site residue. DUMP is bound by residues 166–169, Asn-177, and 207–209; these read RSCD and HLY. Residue Asp-169 coordinates (6R)-5,10-methylene-5,6,7,8-tetrahydrofolate. Ser-263 serves as a coordination point for (6R)-5,10-methylene-5,6,7,8-tetrahydrofolate.

It belongs to the thymidylate synthase family. Bacterial-type ThyA subfamily. In terms of assembly, homodimer.

Its subcellular location is the cytoplasm. The enzyme catalyses dUMP + (6R)-5,10-methylene-5,6,7,8-tetrahydrofolate = 7,8-dihydrofolate + dTMP. Its pathway is pyrimidine metabolism; dTTP biosynthesis. In terms of biological role, catalyzes the reductive methylation of 2'-deoxyuridine-5'-monophosphate (dUMP) to 2'-deoxythymidine-5'-monophosphate (dTMP) while utilizing 5,10-methylenetetrahydrofolate (mTHF) as the methyl donor and reductant in the reaction, yielding dihydrofolate (DHF) as a by-product. This enzymatic reaction provides an intracellular de novo source of dTMP, an essential precursor for DNA biosynthesis. In Buchnera aphidicola subsp. Acyrthosiphon pisum (strain APS) (Acyrthosiphon pisum symbiotic bacterium), this protein is Thymidylate synthase.